The sequence spans 338 residues: MRILPQEPVIREEQNWLTILKNAISDPKLLLKALNLPEDDFEQSIAARKLFSLRVPQPFIDKIEKGNPQDPLFLQVMCSDLEFVQAEGFSTDPLEEKNANAVPNILHKYRNRLLFMAKGGCAVNCRYCFRRHFPYDENPGNKKSWQLALDYIAAHSEIEEVIFSGGDPLMAKDHELAWLIKHLENIPHLQRLRIHTRLPVVIPQRITDEFCTLLAETRLQTVMVTHINHPNEIDQIFAHAMQKLNAVNVTLLNQSVLLKGVNDDAQILKILSDKLFQTGILPYYLHLLDKVQGASHFLISDIEAMQIYKTLQSLTSGYLVPKLAREIAGEPNKTLYAE.

The region spanning 107-330 is the Radical SAM core domain; it reads HKYRNRLLFM…PKLAREIAGE (224 aa). Cys121, Cys125, and Cys128 together coordinate [4Fe-4S] cluster. At Lys333 the chain carries N6-(pyridoxal phosphate)lysine.

It belongs to the radical SAM superfamily. KamA family. It depends on [4Fe-4S] cluster as a cofactor. Pyridoxal 5'-phosphate is required as a cofactor.

It catalyses the reaction L-lysine = D-beta-lysine. In terms of biological role, with EpmA is involved in the beta-lysylation step of the post-translational modification of translation elongation factor P (EF-P) on 'Lys-34'. EpmB appears to act before EpmA. Displays lysine 2,3-aminomutase activity, producing (R)-beta-lysine from (S)-alpha-lysine (L-lysine). This is L-lysine 2,3-aminomutase (epmB) from Haemophilus influenzae (strain ATCC 51907 / DSM 11121 / KW20 / Rd).